We begin with the raw amino-acid sequence, 400 residues long: Melanization protease 1 (400 aa).

An N-terminal signal peptide occupies residues 1–22 (MEPHFFFTVLWMLLMGTSSTYA). Positions 23–137 (QEIFGYCRTP…PNCGENFGDR (115 aa)) are cleaved as a propeptide — activation peptide. One can recognise a Clip domain in the interval 28 to 91 (YCRTPDENSG…FCFTNVQICC (64 aa)). 3 cysteine pairs are disulfide-bonded: Cys-29-Cys-90, Cys-39-Cys-70, and Cys-45-Cys-91. The disordered stretch occupies residues 98–120 (NQQPQWGNHPQPTQTTKPTKRSG). 3 disulfides stabilise this stretch: Cys-130–Cys-268, Cys-168–Cys-184, and Cys-210–Cys-220. The region spanning 138-399 (VVGGNETTKR…YLNWIENNVR (262 aa)) is the Peptidase S1 domain. Residue Asn-142 is glycosylated (N-linked (GlcNAc...) asparagine). Catalysis depends on His-183, which acts as the Charge relay system. 4 residues coordinate Ca(2+): Glu-201, Asp-203, Thr-206, and Asp-209. The active-site Charge relay system is the Asp-248. A glycan (N-linked (GlcNAc...) asparagine) is linked at Asn-296. Intrachain disulfides connect Cys-315-Cys-332 and Cys-342-Cys-375. The Charge relay system role is filled by Ser-346.

Belongs to the peptidase S1 family. CLIP subfamily.

In terms of biological role, serine protease which plays an essential role in the melanization immune response by acting downstream of sp7 to activate prophenoloxidase (PPO1). May function in diverse Hayan-dependent PPO1-activating cascades that are negatively controlled by different serpin proteins; Spn27A in the hemolymph and Spn77BA in the trachea. Regulation of melanization and PPO1 activation appears to be largely independent of the Toll signaling pathway. This Drosophila melanogaster (Fruit fly) protein is Melanization protease 1.